The primary structure comprises 1079 residues: Electrogenic sodium bicarbonate cotransporter 1 (1079 aa).

The tract at residues 1 to 62 is required for interaction with AHCYL1; it reads MEDEAVLDRG…EKKEKERISE (62 aa). At 1–466 the chain is on the cytoplasmic side; it reads MEDEAVLDRG…FASDFYDALN (466 aa). Phosphoserine is present on glutamate 21. At tyrosine 30 the chain carries Phosphotyrosine. Residues 39-52 show a composition bias toward basic residues; it reads YRRRRRHKRKAGHK. The segment at 39–78 is disordered; that stretch reads YRRRRRHKRKAGHKEKKEKERISENYSDKSDVENADESSS. Over residues 53–70 the composition is skewed to basic and acidic residues; the sequence is EKKEKERISENYSDKSDV. 7 positions are modified to phosphoserine: serine 61, serine 65, serine 68, serine 223, serine 232, serine 233, and serine 245. The interval 235-266 is disordered; the sequence is SRMFSNPDNGSPAMTHRNLTSSSLNDISDKPE. 2 positions are modified to phosphothreonine: threonine 249 and threonine 254. Positions 251 to 260 are enriched in polar residues; it reads RNLTSSSLND. Serine 256, serine 257, and serine 262 each carry phosphoserine. A helical transmembrane segment spans residues 467–491; that stretch reads IQALSAILFIYLATVTNAITFGGLL. Residues 492 to 501 lie on the Extracellular side of the membrane; it reads GDATDNMQGV. Residues 502–520 form a helical membrane-spanning segment; the sequence is LESFLGTAVSGAIFCLFAG. Position 521 (glutamine 521) is a topological domain, cytoplasmic. A discontinuously helical transmembrane segment spans residues 522–542; the sequence is PLTILSSTGPVLVFERLLFNF. The Extracellular segment spans residues 543–550; the sequence is SKDHNFDY. Residues 551 to 571 form a helical membrane-spanning segment; that stretch reads LEFRLWIGLWSAFMCLVLVAT. The Cytoplasmic portion of the chain corresponds to 572–585; it reads DASFLVQYFTRFTE. Residues 586–609 traverse the membrane as a helical segment; it reads EGFSSLISFIFIYDAFKKMIKLAD. The Extracellular portion of the chain corresponds to 610-692; sequence YYPINSDFKV…GNNCDFVPDI (83 aa). Residues 693–710 form a helical membrane-spanning segment; the sequence is TLMSFILFLGTYTSSMAM. Residues 711–725 lie on the Cytoplasmic side of the membrane; it reads KKFKTSRYFPTTARK. A helical membrane pass occupies residues 726 to 745; sequence LISDFAIILSILIFCVIDAL. The Extracellular portion of the chain corresponds to 746-779; that stretch reads VGVDTPKLIVPSEFKPTSPNRGWFVPPFGGNPWW. The tract at residues 748 to 779 is interaction with CA4; it reads VDTPKLIVPSEFKPTSPNRGWFVPPFGGNPWW. The chain crosses the membrane as a helical span at residues 780–807; it reads VCLAAAIPALLVTILIFMDQQITAVIVN. Residues 808–819 lie on the Cytoplasmic side of the membrane; it reads RKEHKLKKGAGY. A helical transmembrane segment spans residues 820-836; it reads HLDLFWVAILMVVCSFM. Position 837 (alanine 837) is a topological domain, extracellular. Residues 838–855 traverse the membrane as a discontinuously helical segment; it reads LPWYVAATVISIAHIDSL. Residues 856-877 are Cytoplasmic-facing; sequence KMETETSAPGEQPKFLGVREQR. Residues 878–894 traverse the membrane as a helical segment; sequence VTGTLVFILTGLSVFMA. At 895 to 901 the chain is on the extracellular side; the sequence is PILKFIP. The helical transmembrane segment at 902-918 threads the bilayer; it reads MPVLYGVFLYMGVASLN. The Cytoplasmic portion of the chain corresponds to 919-960; that stretch reads GVQFMDRLKLLLMPLKHQPDFIYLRHVPLRRVHLFTFLQVLC. Residues 961–986 constitute an intramembrane region (discontinuously helical); that stretch reads LALLWILKSTVAAIIFPVMILALVAV. At 987–1079 the chain is on the cytoplasmic side; the sequence is RKGMDYLFSQ…STFLERHTSC (93 aa). Residues 1002 to 1004 form a CA2-binding region; that stretch reads LDD. The tract at residues 1012–1079 is disordered; it reads KKKEDEKKKK…STFLERHTSC (68 aa). Residues serine 1026 and serine 1029 each carry the phosphoserine modification. The CA2-binding stretch occupies residues 1030–1033; sequence DNDD. Residues serine 1034 and serine 1044 each carry the phosphoserine modification. The segment at 1057 to 1059 is required for basolateral targeting; the sequence is FLS. Residues 1062 to 1079 show a composition bias toward basic and acidic residues; it reads KPLDRERSSTFLERHTSC. The residue at position 1069 (serine 1069) is a Phosphoserine.

This sequence belongs to the anion exchanger (TC 2.A.31) family. As to quaternary structure, homodimer. Interacts with CA2/carbonic anhydrase 2 and CA4/carbonic anhydrase 4 which may regulate transporter activity. Isoform 1 but not isoform 2 interacts with AHCYL1 (via PEST domain when phosphorylated); the interaction increases SLC4A4 isoform 1 activity. Interacts with AHCYL2. In terms of processing, phosphorylation of Ser-1026 by PKA increases the binding of CA2 and changes the Na(+):HCO3(-) stoichiometry of the transporter from 3:1 to 2:1. Phosphorylated in presence of STK39 and dephosphorylated in presence of PP1 phosphatase; phosphorylation seems to inhibit SLC4A4 activity. Post-translationally, N-glycosylated. May not be necessary for the transporter basic functions. In terms of tissue distribution, isoform 1 is specifically expressed in pancreatic ducts and acini. Also expressed in parotid acinar cells and in the colonic crypts.

The protein resides in the basolateral cell membrane. The protein localises to the cell membrane. It carries out the reaction 2 hydrogencarbonate(out) + Na(+)(out) = 2 hydrogencarbonate(in) + Na(+)(in). It catalyses the reaction 3 hydrogencarbonate(out) + Na(+)(out) = 3 hydrogencarbonate(in) + Na(+)(in). Activated by cyclic AMP. In terms of biological role, electrogenic sodium/bicarbonate cotransporter with a Na(+):HCO3(-) stoichiometry varying from 1:2 to 1:3. May regulate bicarbonate influx/efflux at the basolateral membrane of cells and regulate intracellular pH. The polypeptide is Electrogenic sodium bicarbonate cotransporter 1 (Slc4a4) (Mus musculus (Mouse)).